We begin with the raw amino-acid sequence, 580 residues long: High affinity choline transporter 1 (580 aa).

At 1–6 (MAFHVE) the chain is on the extracellular side. A helical transmembrane segment spans residues 7–27 (GLIAIIVFYLLILLVGIWAAW). Over 28 to 48 (RTKNSGSAEERSEAIIVGGRD) the chain is Cytoplasmic. The helical transmembrane segment at 49-69 (IGLLVGGFTMTATWVGGGYIN) threads the bilayer. Residues 70–81 (GTAEAVYVPGYG) are Extracellular-facing. The chain crosses the membrane as a helical span at residues 82-102 (LAWAQAPIGYSLSLILGGLFF). The Cytoplasmic segment spans residues 103–125 (AKPMRSKGYVTMLDPFQQIYGKR). Residues 126 to 146 (MGGLLFIPALMGEMFWAAAIF) traverse the membrane as a helical segment. Residues 147–164 (SALGATISVIIDVDMHIS) lie on the Extracellular side of the membrane. The helical transmembrane segment at 165-185 (VIISALIATLYTLVGGLYSVA) threads the bilayer. Residues 186-191 (YTDVVQ) lie on the Cytoplasmic side of the membrane. The helical transmembrane segment at 192 to 212 (LFCIFVGLWISVPFALSHPAV) threads the bilayer. Residues 213–237 (ADIGFTAVHAKYQKPWLGTVDSSEV) lie on the Extracellular side of the membrane. A helical membrane pass occupies residues 238-258 (YSWLDSFLLLMLGGIPWQAYF). The Cytoplasmic portion of the chain corresponds to 259–274 (QRVLSSSSATYAQVLS). Residues 275 to 295 (FLAAFGCLVMAIPAILIGAIG) form a helical membrane-spanning segment. Residues 296–317 (ASTDWNQTAYGLPDPKTTEEAD) are Extracellular-facing. Asparagine 301 is a glycosylation site (N-linked (GlcNAc...) asparagine). The helical transmembrane segment at 318–338 (MILPIVLQYLCPVYISFFGLG) threads the bilayer. The Cytoplasmic segment spans residues 339–376 (AVSAAVMSSADSSILSASSMFARNIYQLSFRQNASDKE). Residues 377-397 (IVWVMRITVFVFGASATAMAL) traverse the membrane as a helical segment. Topologically, residues 398–406 (LTKTVYGLW) are extracellular. Residues 407 to 427 (YLSSDLVYIVIFPQLLCVLFV) form a helical membrane-spanning segment. Topologically, residues 428-435 (KGTNTYGA) are cytoplasmic. Residues 436–456 (VAGYVSGLFLRITGGEPYLYL) traverse the membrane as a helical segment. The Extracellular portion of the chain corresponds to 457–481 (QPLIFYPGYYPDDNGIYNQKFPFKT). A helical transmembrane segment spans residues 482–502 (LAMVTSFLTNICISYLAKYLF). The interval 502–580 (FESGTLPPKL…EGSGTEDNLQ (79 aa)) is mediates interaction with SEC14L1. The Cytoplasmic segment spans residues 503 to 580 (ESGTLPPKLD…EGSGTEDNLQ (78 aa)). The short motif at 527–532 (DKTILV) is the Dileucine-like motif element.

Belongs to the sodium:solute symporter (SSF) (TC 2.A.21) family. As to quaternary structure, homooligomerizes at cell surface. Interacts with SEC14L1; may regulate SLC5A7. Phosphorylated. In terms of tissue distribution, expressed in putamen, spinal cord and medulla. Expressed in cholinergic neurons.

The protein localises to the presynaptic cell membrane. It localises to the cell projection. Its subcellular location is the axon. The protein resides in the early endosome membrane. It is found in the cytoplasmic vesicle. The protein localises to the secretory vesicle. It localises to the synaptic vesicle membrane. It catalyses the reaction choline(out) + n Na(+)(out) = choline(in) + n Na(+)(in). With respect to regulation, choline uptake activity is regulated by SLC5A7/CHT1 internalization (inactive form) from the cell surface and recycling of internalized SLC5A7/CHT1 into the cell surface (active form). Activated by extracellular chloride ion. Specifically inhibited by nanomolar concentrations of hemicholinium 3. Its function is as follows. High-affinity Na(+)-coupled choline transmembrane symporter. Functions as an electrogenic, voltage-dependent transporter with variable charge/choline stoichiometry. Choline uptake and choline-induced current is also Cl(-)-dependent where Cl(-) is likely a regulatory ion rather than cotransported ion. Plays a critical role in acetylcholine (ACh) synthesis by taking up the substrate choline from the synaptic cleft into the presynaptic nerve terminals after neurotransmitter release. SLC5A7/CHT1-mediated choline high-affinity transport in cholinergic neurons is the rate-limiting step for production of ACh, thereby facilitating communication by subsequent action potentials. Localized predominantly in presynaptic terminal intracellular organelles, and translocated to the plasma membrane in active form in response to neuronal activity. The sequence is that of High affinity choline transporter 1 from Homo sapiens (Human).